A 410-amino-acid polypeptide reads, in one-letter code: NADH-quinone oxidoreductase subunit D (410 aa).

Belongs to the complex I 49 kDa subunit family. In terms of assembly, NDH-1 is composed of 14 different subunits. Subunits NuoB, C, D, E, F, and G constitute the peripheral sector of the complex.

It is found in the cell inner membrane. It catalyses the reaction a quinone + NADH + 5 H(+)(in) = a quinol + NAD(+) + 4 H(+)(out). Functionally, NDH-1 shuttles electrons from NADH, via FMN and iron-sulfur (Fe-S) centers, to quinones in the respiratory chain. The immediate electron acceptor for the enzyme in this species is believed to be ubiquinone. Couples the redox reaction to proton translocation (for every two electrons transferred, four hydrogen ions are translocated across the cytoplasmic membrane), and thus conserves the redox energy in a proton gradient. This chain is NADH-quinone oxidoreductase subunit D, found in Nitratiruptor sp. (strain SB155-2).